A 490-amino-acid chain; its full sequence is Gram-negative bacteria-binding protein 3 (490 aa).

The first 25 residues, 1 to 25 (MADALRFVAWSCCLQLLFLLLGVQG), serve as a signal peptide directing secretion. In terms of domain architecture, CBM39 spans 26–126 (YEVPKAKIDV…GSFVVNGYSG (101 aa)). A GH16 domain is found at 162 to 490 (TEVNGAPTRC…KIDYVKVYSL (329 aa)). Residues asparagine 362 and asparagine 373 are each glycosylated (N-linked (GlcNAc...) asparagine).

It belongs to the insect beta-1,3-glucan binding protein family.

The protein resides in the secreted. In terms of biological role, involved in the recognition of invading microorganisms. Binds specifically to beta-1,3-glucan and activates the phenoloxidase cascade. This Drosophila melanogaster (Fruit fly) protein is Gram-negative bacteria-binding protein 3.